The sequence spans 296 residues: ATP phosphoribosyltransferase (296 aa).

This sequence belongs to the ATP phosphoribosyltransferase family.

The protein localises to the cytoplasm. It carries out the reaction 1-(5-phospho-beta-D-ribosyl)-ATP + diphosphate = 5-phospho-alpha-D-ribose 1-diphosphate + ATP. The protein operates within amino-acid biosynthesis; L-histidine biosynthesis; L-histidine from 5-phospho-alpha-D-ribose 1-diphosphate: step 1/9. In terms of biological role, catalyzes the condensation of ATP and 5-phosphoribose 1-diphosphate to form N'-(5'-phosphoribosyl)-ATP (PR-ATP). Has a crucial role in the pathway because the rate of histidine biosynthesis seems to be controlled primarily by regulation of the enzymatic activity. The protein is ATP phosphoribosyltransferase (HIS1) of Yarrowia lipolytica (strain CLIB 122 / E 150) (Yeast).